A 76-amino-acid polypeptide reads, in one-letter code: DNA-directed RNA polymerase subunit omega (76 aa).

It belongs to the RNA polymerase subunit omega family. In terms of assembly, the RNAP catalytic core consists of 2 alpha, 1 beta, 1 beta' and 1 omega subunit. When a sigma factor is associated with the core the holoenzyme is formed, which can initiate transcription.

It catalyses the reaction RNA(n) + a ribonucleoside 5'-triphosphate = RNA(n+1) + diphosphate. Functionally, promotes RNA polymerase assembly. Latches the N- and C-terminal regions of the beta' subunit thereby facilitating its interaction with the beta and alpha subunits. The polypeptide is DNA-directed RNA polymerase subunit omega (Staphylococcus carnosus (strain TM300)).